The primary structure comprises 368 residues: Forkhead box protein I2 (368 aa).

Residues 33–54 (QNQQLPQRPAAPPALGYGRNEY) form a disordered region. Residues 124–218 (RPPYSYSSLI…DNGNFRRKRK (95 aa)) constitute a DNA-binding region (fork-head). Residues 243-272 (SLGSDSPRGASALEQSSYGTPESKSRPAGG) are disordered. Residues 255 to 264 (LEQSSYGTPE) are compositionally biased toward polar residues.

The protein resides in the nucleus. Its function is as follows. Possible transcriptional activator. This Xenopus tropicalis (Western clawed frog) protein is Forkhead box protein I2.